Here is a 205-residue protein sequence, read N- to C-terminus: MDDKQYKGTTTVGIICNNGLVLATERRATMGNLIASRDAQKIYQLTDNIAMTIAGSVGDGQRLARMLQAESKLFELRRHGPMSINALSMLLSNLLWEYRIFYIQVLVGGVDKSGPKLFSLDPAGGRITEVKFSSTGSGSPLAYGVLEDRYKQDMSVEQGVELAAKALESAMKRDSASGNGMQFCVITPGKVEIFEREVGKQVCNS.

The propeptide at 1–8 (MDDKQYKG) is removed in mature form; by autocatalysis. Thr-9 serves as the catalytic Nucleophile.

This sequence belongs to the peptidase T1B family. The 20S proteasome core is composed of 14 alpha and 14 beta subunits that assemble into four stacked heptameric rings, resulting in a barrel-shaped structure. The two inner rings, each composed of seven catalytic beta subunits, are sandwiched by two outer rings, each composed of seven alpha subunits. The catalytic chamber with the active sites is on the inside of the barrel. Has a gated structure, the ends of the cylinder being occluded by the N-termini of the alpha-subunits. Is capped at one or both ends by the proteasome regulatory ATPase, PAN.

The protein resides in the cytoplasm. The enzyme catalyses Cleavage of peptide bonds with very broad specificity.. The formation of the proteasomal ATPase PAN-20S proteasome complex, via the docking of the C-termini of PAN into the intersubunit pockets in the alpha-rings, triggers opening of the gate for substrate entry. Interconversion between the open-gate and close-gate conformations leads to a dynamic regulation of the 20S proteasome proteolysis activity. Functionally, component of the proteasome core, a large protease complex with broad specificity involved in protein degradation. The chain is Proteasome subunit beta from Methanocella paludicola (strain DSM 17711 / JCM 13418 / NBRC 101707 / SANAE).